The chain runs to 138 residues: Ribosomal RNA large subunit methyltransferase H (138 aa).

Residues L57, G86, and 105 to 110 (LSPLTF) each bind S-adenosyl-L-methionine.

This sequence belongs to the RNA methyltransferase RlmH family. Homodimer.

It localises to the cytoplasm. It catalyses the reaction pseudouridine(1915) in 23S rRNA + S-adenosyl-L-methionine = N(3)-methylpseudouridine(1915) in 23S rRNA + S-adenosyl-L-homocysteine + H(+). Functionally, specifically methylates the pseudouridine at position 1915 (m3Psi1915) in 23S rRNA. In Prochlorococcus marinus (strain MIT 9301), this protein is Ribosomal RNA large subunit methyltransferase H.